Reading from the N-terminus, the 356-residue chain is Glutamine synthetase nodule isozyme (356 aa).

The GS beta-grasp domain maps to 19–99; it reads IIAEYIWIGG…VMCDAYTPAG (81 aa). The segment at 41–66 is disordered; that stretch reads PGPVSDPSKLPKWNYDGSSTGQAPGE. Positions 106 to 356 constitute a GS catalytic domain; it reads KRHNAAKIFS…IADTTILWKP (251 aa).

It belongs to the glutamine synthetase family. As to quaternary structure, homooctamer.

The protein localises to the cytoplasm. The catalysed reaction is L-glutamate + NH4(+) + ATP = L-glutamine + ADP + phosphate + H(+). The chain is Glutamine synthetase nodule isozyme from Vigna aconitifolia (Moth bean).